The following is a 115-amino-acid chain: Large ribosomal subunit protein bL20 (115 aa).

It belongs to the bacterial ribosomal protein bL20 family.

Functionally, binds directly to 23S ribosomal RNA and is necessary for the in vitro assembly process of the 50S ribosomal subunit. It is not involved in the protein synthesizing functions of that subunit. The sequence is that of Large ribosomal subunit protein bL20 from Synechococcus sp. (strain CC9902).